A 351-amino-acid polypeptide reads, in one-letter code: Outer membrane protein A (351 aa).

The N-terminal stretch at methionine 1 to alanine 21 is a signal peptide. 8 consecutive transmembrane segments (beta stranded) span residues threonine 27–serine 37, glutamine 55–valine 66, valine 70–tryptophan 78, glutamine 96–proline 107, leucine 112–glycine 120, proline 147–alanine 156, isoleucine 161–glutamine 168, and leucine 187–arginine 195. 4 repeat units span residues alanine 206 to proline 207, alanine 208 to proline 209, alanine 210 to proline 211, and alanine 212 to proline 213. The 4 X 2 AA tandem repeats of A-P stretch occupies residues alanine 206–proline 213. The OmpA-like domain occupies valine 215–lysine 343. Cysteine 316 and cysteine 328 are disulfide-bonded.

Belongs to the outer membrane OOP (TC 1.B.6) superfamily. OmpA family. As to quaternary structure, monomer and homodimer.

Its subcellular location is the cell outer membrane. With TolR probably plays a role in maintaining the position of the peptidoglycan cell wall in the periplasm. Acts as a porin with low permeability that allows slow penetration of small solutes; an internal gate slows down solute passage. Its function is as follows. Required for conjugation with F-type plasmids; probably serves as the mating receptor on recipient cells. This is Outer membrane protein A from Shigella dysenteriae.